The primary structure comprises 144 residues: Actin-associated protein FAM107A (144 aa).

Residues 66–112 are a coiled coil; the sequence is ELQRVLEHRRRNQLIKKKKEELEAKRLQCPFEQELLRRQQRLNQLEK. The Nuclear localization signal motif lies at 74–84; sequence RRRNQLIKKKK. Positions 105–124 are disordered; sequence QRLNQLEKPPEKEEDHAPEF. Basic and acidic residues predominate over residues 112–124; the sequence is KPPEKEEDHAPEF.

This sequence belongs to the FAM107 family. As to quaternary structure, interacts with ACTB. Interacts with COMMD1; this interaction stabilizes COMMD1 in the nucleus. Interacts with MAP1A. Interacts with PRDX1. Interacts with F-actin. Widely expressed. Expressed in neurons. Expressed in malignant glial tumors. Expression is reduced or absent in a number of cancer cell lines.

The protein localises to the nucleus. The protein resides in the cytoplasm. It localises to the cytoskeleton. Its subcellular location is the stress fiber. It is found in the cell junction. The protein localises to the focal adhesion. The protein resides in the cell projection. It localises to the ruffle membrane. Its subcellular location is the synapse. Its function is as follows. Stress-inducible actin-binding protein that plays a role in synaptic and cognitive functions by modulating actin filamentous (F-actin) dynamics. Mediates polymerization of globular actin to F-actin. Also binds to, stabilizes and bundles F-actin. Involved in synaptic function by regulating neurite outgrowth in an actin-dependent manner and for the acquisition of hippocampus-dependent cognitive function, such as learning and long-term memory. Plays a role in the actin and microtubule cytoskeleton organization; negatively regulates focal adhesion (FA) assembly promoting malignant glial cell migration in an actin-, microtubule- and MAP1A-dependent manner. Also involved in neuroblastoma G1/S phase cell cycle progression and cell proliferation inhibition by stimulating ubiquitination of NF-kappa-B subunit RELA and NF-kappa-B degradation in a COMMD1- and actin-dependent manner. May play a role in tumor development. This is Actin-associated protein FAM107A from Homo sapiens (Human).